The chain runs to 101 residues: Small ribosomal subunit protein uS14 (101 aa).

The protein belongs to the universal ribosomal protein uS14 family. Part of the 30S ribosomal subunit. Contacts proteins S3 and S10.

Functionally, binds 16S rRNA, required for the assembly of 30S particles and may also be responsible for determining the conformation of the 16S rRNA at the A site. The chain is Small ribosomal subunit protein uS14 from Aeromonas hydrophila subsp. hydrophila (strain ATCC 7966 / DSM 30187 / BCRC 13018 / CCUG 14551 / JCM 1027 / KCTC 2358 / NCIMB 9240 / NCTC 8049).